The primary structure comprises 467 residues: E3 ubiquitin-protein ligase IE61 (467 aa).

The segment at cysteine 19–arginine 58 adopts an RING-type zinc-finger fold. Disordered stretches follow at residues glycine 101–lysine 171, glutamine 205–threonine 238, isoleucine 344–arginine 364, and aspartate 413–serine 467. A compositionally biased stretch (polar residues) spans glutamate 116–arginine 143. Residues serine 149 to proline 161 show a composition bias toward low complexity. Residues threonine 162–lysine 171 are compositionally biased toward polar residues. Positions arginine 228–threonine 238 are enriched in basic and acidic residues. 2 stretches are compositionally biased toward low complexity: residues glycine 429–serine 443 and lysine 450–glycine 459.

As to quaternary structure, interacts with host BTRC; this interaction seems to inactivate SCF-mediated protein degradation in general. Auto-ubiquitinated.

The enzyme catalyses S-ubiquitinyl-[E2 ubiquitin-conjugating enzyme]-L-cysteine + [acceptor protein]-L-lysine = [E2 ubiquitin-conjugating enzyme]-L-cysteine + N(6)-ubiquitinyl-[acceptor protein]-L-lysine.. RING-finger E3 ubiquitin ligase that degrades host SP100, one of the major components of ND10 nuclear bodies, thereby disrupting the organization of these bodies. Also plays a role in the inhibition of host NF-kappa-B pathway by blocking the SCF(BTRC)-mediated addition of ubiquitin chains to host I-kappa-B-alpha/NFKBIA, thereby interfering with its degradation. The protein is E3 ubiquitin-protein ligase IE61 (61) of Varicella-zoster virus (strain Dumas) (HHV-3).